Consider the following 161-residue polypeptide: RuBisCO chaperone RbcX (161 aa).

Disordered stretches follow at residues 1 to 20 (MQFMGTASRMASTQRAKPME) and 130 to 161 (LGAEPSLPETEVSDRPSDSATPDDASNASHAD). The segment covering 147-161 (DSATPDDASNASHAD) has biased composition (polar residues).

This sequence belongs to the RbcX family. In terms of assembly, homodimer. Interacts with the exposed C-terminal peptide of endogenous RbcL ('Lys-460-Asp-470') via its central cleft, as well as C-terminal peptides from other cyanobacterial RbcL. Contacts a second RbcL monomer via its peripheral polar surface.

It localises to the carboxysome. The protein resides in the cytoplasm. An RbcL-specific chaperone. The central cleft of the RbcX homodimer (RbcX2) binds the C-terminus of an RbcL monomer, stabilizing the C-terminus and probably preventing its reassociation with chaperonin GroEL-ES. At the same time the peripheral region of RbcX2 binds a second RbcL monomer, bridging the RbcL homodimers in the correct orientation. The RbcX2(2)-bound RbcL dimers then assemble into the RbcL8 core (RbcL8-(RbcX2)8). RbcS binding triggers the release of RbcX2. The polypeptide is RuBisCO chaperone RbcX (Synechococcus sp. (strain ATCC 27144 / PCC 6301 / SAUG 1402/1) (Anacystis nidulans)).